Consider the following 477-residue polypeptide: Ribulose bisphosphate carboxylase large chain (477 aa).

The propeptide occupies Met1–Ser2. Pro3 carries the N-acetylproline modification. N6,N6,N6-trimethyllysine is present on Lys14. Substrate-binding residues include Asn123 and Thr173. Lys175 serves as the catalytic Proton acceptor. Lys177 provides a ligand contact to substrate. Mg(2+)-binding residues include Lys201, Asp203, and Glu204. Residue Lys201 is modified to N6-carboxylysine. The active-site Proton acceptor is the His294. Positions 295, 327, and 379 each coordinate substrate.

This sequence belongs to the RuBisCO large chain family. Type I subfamily. Heterohexadecamer of 8 large chains and 8 small chains; disulfide-linked. The disulfide link is formed within the large subunit homodimers. Requires Mg(2+) as cofactor. Post-translationally, the disulfide bond which can form in the large chain dimeric partners within the hexadecamer appears to be associated with oxidative stress and protein turnover.

The protein resides in the plastid. The protein localises to the chloroplast. It carries out the reaction 2 (2R)-3-phosphoglycerate + 2 H(+) = D-ribulose 1,5-bisphosphate + CO2 + H2O. The catalysed reaction is D-ribulose 1,5-bisphosphate + O2 = 2-phosphoglycolate + (2R)-3-phosphoglycerate + 2 H(+). Its function is as follows. RuBisCO catalyzes two reactions: the carboxylation of D-ribulose 1,5-bisphosphate, the primary event in carbon dioxide fixation, as well as the oxidative fragmentation of the pentose substrate in the photorespiration process. Both reactions occur simultaneously and in competition at the same active site. In Atropa belladonna (Belladonna), this protein is Ribulose bisphosphate carboxylase large chain.